Consider the following 745-residue polypeptide: Pentatricopeptide repeat-containing protein At1g71420 (745 aa).

PPR repeat units follow at residues 58–88 (SQQAYAALFQACAEQRNLLDGINLHHHMLSH), 95–125 (NVILANFLINMYAKCGNILYARQVFDTMPER), 126–160 (NVVSWTALITGYVQAGNEQEGFCLFSSMLSHCFPN), 191–224 (SIYVANAVISMYGRCHDGAAAYEAWTVFEAIKFK), 225–259 (NLVTWNSMIAAFQCCNLGKKAIGVFMRMHSDGVGF), 260–296 (DRATLLNICSSLYKSSDLVPNEVSKCCLQLHSLTVKS), 301–332 (QTEVATALIKVYSEMLEDYTDCYKLFMEMSHC), 334–367 (DIVAWNGIITAFAVYDPERAIHLFGQLRQEKLSP), 368–402 (DWYTFSSVLKACAGLVTARHALSIHAQVIKGGFLA), 403–437 (DTVLNNSLIHAYAKCGSLDLCMRVFDDMDSRDVVS), 438–464 (WNSMLKAYSLHGQVDSILPVFQKMDIN), 466–496 (DSATFIALLSACSHAGRVEEGLRIFRSMFEK), and 502–532 (QLNHYACVIDMLSRAERFAEAEEVIKQMPMD). The type E motif stretch occupies residues 537-613 (VWIALLGSCR…EPDLSWTEIG (77 aa)). A type E(+) motif region spans residues 614-644 (NKVHEFASGGRHRPDKEAVYRELKRLISWLK). Positions 645 to 745 (EMGYVPEMRS…DSSCSCNDYW (101 aa)) are type DYW motif.

Belongs to the PPR family. PCMP-H subfamily.

The chain is Pentatricopeptide repeat-containing protein At1g71420 (PCMP-H70) from Arabidopsis thaliana (Mouse-ear cress).